The following is a 331-amino-acid chain: Betaine-homocysteine S-methyltransferase (331 aa).

Positions 3–324 (VNQKWNWDTK…TDVLAIRKYV (322 aa)) constitute a Hcy-binding domain. Positions 243, 309, and 310 each coordinate Zn(2+).

This sequence belongs to the Betaine-homocysteine S-methyltransferase, BHMT family. It depends on Zn(2+) as a cofactor.

The enzyme catalyses L-homocysteine + glycine betaine = N,N-dimethylglycine + L-methionine. It functions in the pathway amino-acid biosynthesis; L-methionine biosynthesis via de novo pathway. Involved in the regulation of homocysteine metabolism. Converts betaine and homocysteine to dimethylglycine and methionine, respectively. The chain is Betaine-homocysteine S-methyltransferase from Drosophila melanogaster (Fruit fly).